The primary structure comprises 399 residues: Sphingosine-1-phosphate phosphatase 2 (399 aa).

A run of 4 helical transmembrane segments spans residues 88–108 (YLFQFSAALGQEVFYITFLPF), 121–141 (LIIIWVLVMYIGQVAKDVLKW), 160–180 (YGMPSTHAMAATAIAFTLLIS), and 185–205 (YQYPFVLGLVMAVVFSTLVCL). Positions 136 to 144 (KDVLKWPRP) are phosphatase sequence motif I. Residues 163-166 (PSTH) are phosphatase sequence motif II. Residue His-166 is the Proton donor of the active site. A phosphatase sequence motif III region spans residues 206 to 217 (SRLYTGMHTVLD). The active-site Nucleophile is the His-213. Transmembrane regions (helical) follow at residues 219–239 (LGGVLITALLIVLTYPAWTFI), 247–267 (PLFPVCVIVVPFFLCYNYPVS), 280–300 (ILAAGAGVTIGFWINHFFQLV), 318–338 (TYMLVLGLTKFAVGIVLILLV), and 371–391 (VPYKFVTYTSVGICATTFVPM).

It belongs to the type 2 lipid phosphate phosphatase family. Expressed strongly in kidney and heart, followed by brain, colon, small intestine and lung. Not detected in skeletal muscle, thymus, spleen, liver, placenta, and peripheral blood leukocytes.

The protein resides in the endoplasmic reticulum membrane. The enzyme catalyses sphinganine 1-phosphate + H2O = sphinganine + phosphate. It carries out the reaction sphing-4-enine 1-phosphate + H2O = sphing-4-enine + phosphate. The catalysed reaction is (4R)-hydroxysphinganine 1-phosphate + H2O = (4R)-hydroxysphinganine + phosphate. Has specific phosphohydrolase activity towards sphingoid base 1-phosphates. Has high phosphohydrolase activity against dihydrosphingosine-1-phosphate and sphingosine-1-phosphate (S1P) in vitro. Sphingosine-1-phosphate phosphatase activity is needed for efficient recycling of sphingosine into the sphingolipid synthesis pathway. May play a role in attenuating intracellular sphingosine 1-phosphate (S1P) signaling. May play a role in pro-inflammatory signaling. Plays a role in the regulation of pancreatic islet beta-cell endoplasmic reticulum stress and proliferation. In Homo sapiens (Human), this protein is Sphingosine-1-phosphate phosphatase 2.